Here is a 222-residue protein sequence, read N- to C-terminus: tRNA (guanine-N(1)-)-methyltransferase (222 aa).

Residues G111 and L131–I136 contribute to the S-adenosyl-L-methionine site.

Belongs to the RNA methyltransferase TrmD family. As to quaternary structure, homodimer.

It is found in the cytoplasm. The catalysed reaction is guanosine(37) in tRNA + S-adenosyl-L-methionine = N(1)-methylguanosine(37) in tRNA + S-adenosyl-L-homocysteine + H(+). Functionally, specifically methylates guanosine-37 in various tRNAs. This is tRNA (guanine-N(1)-)-methyltransferase from Leptospira borgpetersenii serovar Hardjo-bovis (strain JB197).